We begin with the raw amino-acid sequence, 251 residues long: 3-deoxy-manno-octulosonate cytidylyltransferase (251 aa).

The protein belongs to the KdsB family.

It is found in the cytoplasm. It carries out the reaction 3-deoxy-alpha-D-manno-oct-2-ulosonate + CTP = CMP-3-deoxy-beta-D-manno-octulosonate + diphosphate. It functions in the pathway nucleotide-sugar biosynthesis; CMP-3-deoxy-D-manno-octulosonate biosynthesis; CMP-3-deoxy-D-manno-octulosonate from 3-deoxy-D-manno-octulosonate and CTP: step 1/1. The protein operates within bacterial outer membrane biogenesis; lipopolysaccharide biosynthesis. Its function is as follows. Activates KDO (a required 8-carbon sugar) for incorporation into bacterial lipopolysaccharide in Gram-negative bacteria. The chain is 3-deoxy-manno-octulosonate cytidylyltransferase from Rhizobium etli (strain CIAT 652).